The primary structure comprises 219 residues: uncharacterized protein (219 aa).

One can recognise an HD domain in the interval Gln-57–Leu-158.

This is an uncharacterized protein from Acanthamoeba polyphaga mimivirus (APMV).